Consider the following 155-residue polypeptide: Endoribonuclease YbeY (155 aa).

3 residues coordinate Zn(2+): His118, His122, and His128.

This sequence belongs to the endoribonuclease YbeY family. Requires Zn(2+) as cofactor.

It localises to the cytoplasm. Functionally, single strand-specific metallo-endoribonuclease involved in late-stage 70S ribosome quality control and in maturation of the 3' terminus of the 16S rRNA. The chain is Endoribonuclease YbeY from Bordetella petrii (strain ATCC BAA-461 / DSM 12804 / CCUG 43448).